The following is a 321-amino-acid chain: Digestive cysteine proteinase 3 (321 aa).

The N-terminal stretch at 1–16 (MKVAALFLCGLALATA) is a signal peptide. A propeptide spans 17 to 106 (SPSWDHFKTQ…AVFTAEAGPM (90 aa)) (activation peptide). Disulfide bonds link cysteine 127-cysteine 170, cysteine 161-cysteine 203, and cysteine 261-cysteine 310. Cysteine 130 is a catalytic residue. Active-site residues include histidine 268 and asparagine 288.

Belongs to the peptidase C1 family.

With respect to regulation, inhibited by E-64, antipain, leupeptin, heavy metal ions, iodoacetic acid, dithionitrobenzene, p-hydroxymercuri-benzoate; activated by mercaptoethanol and dithiothreitol. This Homarus americanus (American lobster) protein is Digestive cysteine proteinase 3 (LCP3).